We begin with the raw amino-acid sequence, 88 residues long: MSTSTTFQIHYFASASTYTGKQTERLPAPLPLPQLFDTLESMYPGIKEKVLTSCGVSLGDEYVDVEADIQVMIHPGDEVAVIPPVSSG.

The residue at position 88 (Gly88) is a 1-thioglycine; alternate. The residue at position 88 (Gly88) is a Glycyl adenylate; alternate.

It belongs to the MoaD family. MOCS2A subfamily. In terms of assembly, heterotetramer; composed of 2 small (MOCS2A) and 2 large (MOCS2B) subunits. C-terminal thiocarboxylation occurs in 2 steps, it is first acyl-adenylated (-COAMP) via the hesA/moeB/thiF part of uba4, then thiocarboxylated (-COSH) via the rhodanese domain of uba4.

The protein localises to the cytoplasm. It functions in the pathway cofactor biosynthesis; molybdopterin biosynthesis. Acts as a sulfur carrier required for molybdopterin biosynthesis. Component of the molybdopterin synthase complex that catalyzes the conversion of precursor Z into molybdopterin by mediating the incorporation of 2 sulfur atoms into precursor Z to generate a dithiolene group. In the complex, serves as sulfur donor by being thiocarboxylated (-COSH) at its C-terminus by uba4. After interaction with MOCS2B, the sulfur is then transferred to precursor Z to form molybdopterin. The polypeptide is Molybdopterin synthase sulfur carrier subunit (Aspergillus niger (strain ATCC MYA-4892 / CBS 513.88 / FGSC A1513)).